Consider the following 142-residue polypeptide: MRNYDLSPLLRQWIGFDKLANALQTAGESQSFPPYNIEKSDDNHYRITLALAGFRQEDLDIQLEGTRLVVKGTPQQPEKETTWLHQGLVSQAFSLSFTLADNMEVSGATFTNGLLHIDLTRNEPEQIAPQRIAISERPALNS.

The 112-residue stretch at 26–137 (AGESQSFPPY…APQRIAISER (112 aa)) folds into the sHSP domain.

This sequence belongs to the small heat shock protein (HSP20) family. Homodimer. Forms homomultimers of about 100-150 subunits at optimal growth temperatures. Conformation changes to oligomers at high temperatures or high ionic concentrations. The decrease in size of the multimers is accompanied by an increase in chaperone activity.

It localises to the cytoplasm. Associates with aggregated proteins, together with IbpA, to stabilize and protect them from irreversible denaturation and extensive proteolysis during heat shock and oxidative stress. Aggregated proteins bound to the IbpAB complex are more efficiently refolded and reactivated by the ATP-dependent chaperone systems ClpB and DnaK/DnaJ/GrpE. Its activity is ATP-independent. The sequence is that of Small heat shock protein IbpB from Klebsiella pneumoniae (strain 342).